The chain runs to 27 residues: Trypsin inhibitor 5 (27 aa).

3 cysteine pairs are disulfide-bonded: Cys1/Cys18, Cys8/Cys20, and Cys14/Cys26.

The protein resides in the secreted. Its function is as follows. Inhibits trypsin. The protein is Trypsin inhibitor 5 of Sechium edule (Chayote).